The chain runs to 440 residues: Transposon Ty1-MR1 Gag polyprotein (440 aa).

Composition is skewed to polar residues over residues 1–31, 46–60, and 137–168; these read MESQ…TTQD, VSTQ…TPLS, and VGTH…TNQH. 3 disordered regions span residues 1–88, 137–174, and 350–424; these read MESQ…YPQQ, VGTH…PPPI, and QQES…TTEP. The segment at 299-401 is RNA-binding; the sequence is NNGIPINNKV…NSQSRTARAH (103 aa). Residues 363 to 372 are compositionally biased toward basic and acidic residues; sequence SPSDEKKDSR. The span at 373–411 shows a compositional bias: polar residues; the sequence is TYTNTTKPKSITRNSQKPNNSQSRTARAHNVSTFNNSPG.

As to quaternary structure, homotrimer.

The protein resides in the cytoplasm. In terms of biological role, capsid protein (CA) is the structural component of the virus-like particle (VLP), forming the shell that encapsulates the retrotransposons dimeric RNA genome. The particles are assembled from trimer-clustered units and there are holes in the capsid shells that allow for the diffusion of macromolecules. CA also has nucleocapsid-like chaperone activity, promoting primer tRNA(i)-Met annealing to the multipartite primer-binding site (PBS), dimerization of Ty1 RNA and initiation of reverse transcription. The polypeptide is Transposon Ty1-MR1 Gag polyprotein (TY1A-MR1) (Saccharomyces cerevisiae (strain ATCC 204508 / S288c) (Baker's yeast)).